Reading from the N-terminus, the 353-residue chain is Histidinol-phosphate aminotransferase (353 aa).

K209 carries the N6-(pyridoxal phosphate)lysine modification.

This sequence belongs to the class-II pyridoxal-phosphate-dependent aminotransferase family. Histidinol-phosphate aminotransferase subfamily. As to quaternary structure, homodimer. Pyridoxal 5'-phosphate serves as cofactor.

The catalysed reaction is L-histidinol phosphate + 2-oxoglutarate = 3-(imidazol-4-yl)-2-oxopropyl phosphate + L-glutamate. Its pathway is amino-acid biosynthesis; L-histidine biosynthesis; L-histidine from 5-phospho-alpha-D-ribose 1-diphosphate: step 7/9. In Buchnera aphidicola subsp. Cinara cedri (strain Cc), this protein is Histidinol-phosphate aminotransferase.